The following is a 242-amino-acid chain: Mannosyl-3-phosphoglycerate phosphatase (242 aa).

The Nucleophile role is filled by D8. Mg(2+)-binding residues include D8, D10, S169, and D204.

It belongs to the HAD-like hydrolase superfamily. MPGP family. Mg(2+) serves as cofactor.

It localises to the cytoplasm. The catalysed reaction is 2-O-(alpha-D-mannosyl)-3-phosphoglycerate + H2O = (2R)-2-O-(alpha-D-mannosyl)-glycerate + phosphate. It participates in carbohydrate biosynthesis; 2-(alpha-D-mannosyl)-D-glycerate biosynthesis; 2-(alpha-D-mannosyl)-D-glycerate from GDP-alpha-D-mannose (MPG route): step 2/2. Its function is as follows. Hydrolyzes mannosyl-3-phosphoglycerate (MPG) to form the osmolyte mannosylglycerate (MG). This chain is Mannosyl-3-phosphoglycerate phosphatase, found in Pyrococcus furiosus (strain ATCC 43587 / DSM 3638 / JCM 8422 / Vc1).